Consider the following 150-residue polypeptide: Large ribosomal subunit protein bL9 (150 aa).

The protein belongs to the bacterial ribosomal protein bL9 family.

Its function is as follows. Binds to the 23S rRNA. The protein is Large ribosomal subunit protein bL9 of Albidiferax ferrireducens (strain ATCC BAA-621 / DSM 15236 / T118) (Rhodoferax ferrireducens).